The primary structure comprises 577 residues: Arginine--tRNA ligase (577 aa).

The 'HIGH' region signature appears at 122–132 (PNVAKEMHVGH).

This sequence belongs to the class-I aminoacyl-tRNA synthetase family. Monomer.

The protein resides in the cytoplasm. The catalysed reaction is tRNA(Arg) + L-arginine + ATP = L-arginyl-tRNA(Arg) + AMP + diphosphate. The sequence is that of Arginine--tRNA ligase from Escherichia coli O1:K1 / APEC.